Consider the following 131-residue polypeptide: MSMHDPISDMLTRIRNAQRVTKASVAMPSSKLKVAIAAVLKDEGYIEDFAVTGEEKKPVLDIQLKYYAGRPVIERIERVSRPGLRIYKGSNDIPRVMNGLGVAIVSTSKGVMTDRKARAAGIGGELLCIVA.

The protein belongs to the universal ribosomal protein uS8 family. In terms of assembly, part of the 30S ribosomal subunit. Contacts proteins S5 and S12.

In terms of biological role, one of the primary rRNA binding proteins, it binds directly to 16S rRNA central domain where it helps coordinate assembly of the platform of the 30S subunit. The sequence is that of Small ribosomal subunit protein uS8 from Laribacter hongkongensis (strain HLHK9).